Reading from the N-terminus, the 116-residue chain is Putative pterin-4-alpha-carbinolamine dehydratase (116 aa).

The protein belongs to the pterin-4-alpha-carbinolamine dehydratase family.

The catalysed reaction is (4aS,6R)-4a-hydroxy-L-erythro-5,6,7,8-tetrahydrobiopterin = (6R)-L-erythro-6,7-dihydrobiopterin + H2O. In Stenotrophomonas maltophilia (strain K279a), this protein is Putative pterin-4-alpha-carbinolamine dehydratase.